We begin with the raw amino-acid sequence, 62 residues long: Large ribosomal subunit protein bL28 (62 aa).

Belongs to the bacterial ribosomal protein bL28 family.

The protein is Large ribosomal subunit protein bL28 of Carboxydothermus hydrogenoformans (strain ATCC BAA-161 / DSM 6008 / Z-2901).